An 89-amino-acid chain; its full sequence is Small ribosomal subunit protein uS15 (89 aa).

This sequence belongs to the universal ribosomal protein uS15 family. As to quaternary structure, part of the 30S ribosomal subunit. Forms a bridge to the 50S subunit in the 70S ribosome, contacting the 23S rRNA.

One of the primary rRNA binding proteins, it binds directly to 16S rRNA where it helps nucleate assembly of the platform of the 30S subunit by binding and bridging several RNA helices of the 16S rRNA. Its function is as follows. Forms an intersubunit bridge (bridge B4) with the 23S rRNA of the 50S subunit in the ribosome. In Paraburkholderia phymatum (strain DSM 17167 / CIP 108236 / LMG 21445 / STM815) (Burkholderia phymatum), this protein is Small ribosomal subunit protein uS15.